A 74-amino-acid chain; its full sequence is Protein RALF-like 25 (74 aa).

The N-terminal stretch at 1-22 (MKTFMIILLVICSILIVGRVEA) is a signal peptide. 2 disulfides stabilise this stretch: cysteine 35/cysteine 44 and cysteine 62/cysteine 68.

The protein belongs to the plant rapid alkalinization factor (RALF) family.

It localises to the secreted. Functionally, cell signaling peptide that may regulate plant stress, growth, and development. Mediates a rapid alkalinization of extracellular space by mediating a transient increase in the cytoplasmic Ca(2+) concentration leading to a calcium-dependent signaling events through a cell surface receptor and a concomitant activation of some intracellular mitogen-activated protein kinases. The protein is Protein RALF-like 25 (RALFL25) of Arabidopsis thaliana (Mouse-ear cress).